A 188-amino-acid polypeptide reads, in one-letter code: Elongation factor P (188 aa).

At K34 the chain carries N6-(3,6-diaminohexanoyl)-5-hydroxylysine.

It belongs to the elongation factor P family. In terms of processing, may be beta-lysylated on the epsilon-amino group of Lys-34 by the combined action of EpmA and EpmB, and then hydroxylated on the C5 position of the same residue by EpmC (if this protein is present). Lysylation is critical for the stimulatory effect of EF-P on peptide-bond formation. The lysylation moiety may extend toward the peptidyltransferase center and stabilize the terminal 3-CCA end of the tRNA. Hydroxylation of the C5 position on Lys-34 may allow additional potential stabilizing hydrogen-bond interactions with the P-tRNA.

The protein resides in the cytoplasm. Its pathway is protein biosynthesis; polypeptide chain elongation. In terms of biological role, involved in peptide bond synthesis. Alleviates ribosome stalling that occurs when 3 or more consecutive Pro residues or the sequence PPG is present in a protein, possibly by augmenting the peptidyl transferase activity of the ribosome. Modification of Lys-34 is required for alleviation. This Xanthomonas oryzae pv. oryzae (strain MAFF 311018) protein is Elongation factor P.